The chain runs to 471 residues: Variant surface glycoprotein ILTAT 1.1BC (471 aa).

A signal peptide spans Met-1 to Ala-21. Residue Asn-130 is glycosylated (N-linked (GlcNAc...) asparagine). Residues Thr-158–Glu-168 are compositionally biased toward polar residues. Disordered stretches follow at residues Thr-158–Lys-183 and Gly-204–Ser-232. The segment covering Asp-214–Asn-226 has biased composition (basic and acidic residues). N-linked (GlcNAc...) asparagine glycans are attached at residues Asn-220 and Asn-260. Intrachain disulfides connect Cys-397–Cys-410 and Cys-406–Cys-421. The interval Ala-432–Ser-454 is disordered. An N-linked (GlcNAc...) asparagine glycan is attached at Asn-450. Ser-454 carries the GPI-anchor amidated serine lipid modification. Residues Asn-455–Leu-471 constitute a propeptide, removed in mature form.

The protein resides in the cell membrane. In terms of biological role, VSG forms a coat on the surface of the parasite. The trypanosome evades the immune response of the host by expressing a series of antigenically distinct VSGs from an estimated 1000 VSG genes. This Trypanosoma brucei brucei protein is Variant surface glycoprotein ILTAT 1.1BC.